The primary structure comprises 721 residues: Sodium/hydrogen exchanger 6 (721 aa).

Positions 1–44 are disordered; that stretch reads MTSPKPWARSAGSCQTQRAVRTRKKECREEGESDTEKGPAASSA. Positions 26–37 are enriched in basic and acidic residues; the sequence is ECREEGESDTEK. Transmembrane regions (helical) follow at residues 91 to 111, 123 to 143, 196 to 216, 231 to 251, 272 to 292, 298 to 318, 344 to 364, 388 to 412, 434 to 454, 456 to 476, 499 to 519, and 535 to 555; these read SANL…IWLF, GLAM…IHVP, VTFD…FYAG, ILAY…SIMY, CLLF…AIFH, VELY…AIVL, IGIF…TGVV, MSWS…FCGI, FELL…LTLF, FQNH…IFLG, NFQH…ALAI, and LLIV…MLSC.

The protein belongs to the monovalent cation:proton antiporter 1 (CPA1) transporter (TC 2.A.36) family. Homodimer. Interacts with RACK1; regulates the distribution of SLC9A6 between endosomes and the plasma membrane. Ubiquitinated (in vitro). In terms of processing, glycosylated.

The protein localises to the endosome membrane. It is found in the recycling endosome membrane. Its subcellular location is the early endosome membrane. It localises to the late endosome membrane. The protein resides in the cell membrane. It carries out the reaction Na(+)(in) + H(+)(out) = Na(+)(out) + H(+)(in). It catalyses the reaction K(+)(in) + H(+)(out) = K(+)(out) + H(+)(in). Functionally, endosomal Na(+), K(+)/H(+) antiporter. Mediates the electroneutral exchange of endosomal luminal H(+) for a cytosolic Na(+) or K(+). By facilitating proton efflux, SLC9A6 counteracts the acidity generated by vacuolar (V)-ATPase, thereby limiting luminal acidification. Responsible for alkalizing and maintaining the endosomal pH, and consequently in, e.g., endosome maturation and trafficking of recycling endosomal cargo. Plays a critical role during neurodevelopment by regulating synaptic development and plasticity. Implicated in the maintenance of cell polarity in a manner that is dependent on its ability to modulate intravesicular pH. Regulates intracelular pH in some specialized cells, osteoclasts and stereocilia where this transporter localizes to the plasma membrane. The chain is Sodium/hydrogen exchanger 6 from Rattus norvegicus (Rat).